A 286-amino-acid polypeptide reads, in one-letter code: Main hemagglutinin component type C (286 aa).

One copy of the 1-alpha repeat lies at 2–55; that stretch reads SQTNANDLRNNEVFFISPSNNTNKVLDKISQSEVKLWNKLSGANQKWRLIYDTN. Ricin B-type lectin domains are found at residues 12 to 140 and 180 to 284; these read NEVF…FKFS and DSSR…WIIN. A 1-beta repeat occupies 56–100; sequence KQAYKIKVMDNTSLILTWNAPLSSVSVKTDTNGDNQYWYLLQNYI. The stretch at 101 to 148 is one 1-gamma repeat; that stretch reads SRNVIIRNYMNPNLVLQYNIDDTLMVSTQTSSSNQFFKFSNCIYEALN. One copy of the 2-alpha repeat lies at 149–193; that stretch reads NRNCKLQTQLNSDRFLSKNLNSQIIVLWQWFDSSRQKWIIEYNET. The segment at 167–183 is sugar-binding site 1; that stretch reads NLNSQIIVLWQWFDSSR. One copy of the 2-beta repeat lies at 194-239; that stretch reads KSAYTLKCQENNRYLTWIQNSNNYVETYQSTDSLIQYWNINYLDND. Residues 240–286 form a 2-gamma repeat; that stretch reads ASKYILYNLQDTNRVLDVYNSQIANGTHVIVDSYHGNTNQQWIINLI. Positions 256–279 are sugar-binding site 2; sequence DVYNSQIANGTHVIVDSYHGNTNQ.

Botulinum toxins are produced as progenitor toxins of large molecular sizes of 12S (M toxin) and 16S (L toxin). M toxin consists of a non-toxic, non-hemagglutinin component (NTNHA) and the neurotoxin. L toxin consists of the M toxin and the 3 subcomponents of hemagglutinin (HA). HA is composed of subcomponents of 70, 33, and 17 kDa. The 70 kDa subcomponent undergoes proteolytic processing and is split into HA-55 (also called HA-53 and HA3b) and HA-22-23 (also called HA3a). The stoichiometry of the whole complex has been modeled as one BoNT/C, one NTNHA, three HA-70, six HA-33 and three HA-17.

Its subcellular location is the secreted. Functionally, agglutinates human erythrocytes. The hemagglutinin (HA) component of the progenitor toxin protects the structural integrity of botulinum neurotoxin; may increase internalization of the neurotoxin into the bloodstream of the host. The hemagglutinin (HA) component is involved in binding to the upper small intestine through interactions with glycolipids and glycoproteins containing sialic acid moieties. Binds galactose or oligosaccharides with galactose at their non-reducing end. Binds eukaryotic host mucins; binding is inhibited by N-acetyl-beta-neuraminic acid, N-acetyl-D-galactosamine, galactose, and methyl N-acetyl-beta-neuraminic acid. Binds N-acetyl-beta-neuraminic acid, N-acetyl-D-galactosamine and galactose (but not glucose) via 2 sites. In Clostridium botulinum C (Clostridium botulinum C bacteriophage), this protein is Main hemagglutinin component type C.